The primary structure comprises 445 residues: Argininosuccinate synthase (445 aa).

Residues Ala-17 to Ser-25 and Ala-43 each bind ATP. Tyr-99 serves as a coordination point for L-citrulline. ATP is bound by residues Gly-129 and Thr-131. L-aspartate is bound by residues Thr-131, Asn-135, and Asp-136. Residue Asn-135 participates in L-citrulline binding. Asp-136 is a binding site for ATP. Residues Arg-139 and Ser-192 each coordinate L-citrulline. Asp-194 contributes to the ATP binding site. L-citrulline is bound by residues Thr-201, Glu-203, and Glu-280.

Belongs to the argininosuccinate synthase family. Type 2 subfamily. As to quaternary structure, homotetramer.

The protein localises to the cytoplasm. It catalyses the reaction L-citrulline + L-aspartate + ATP = 2-(N(omega)-L-arginino)succinate + AMP + diphosphate + H(+). It functions in the pathway amino-acid biosynthesis; L-arginine biosynthesis; L-arginine from L-ornithine and carbamoyl phosphate: step 2/3. This Herminiimonas arsenicoxydans protein is Argininosuccinate synthase.